A 499-amino-acid chain; its full sequence is MNDSKDAPKSYDFDLIIIGGGSGGLAAAKEAAKFDKKVMVLDFVTPTPLGTRWGLGGTCVNVGCIPKKLMHQAALLGQALKDSRNYGWKLEDTVKHDWEKMTESVQNHIGSLNWGYRVALREKKVVYENAYGKFIGPHKIMATNNKGKEKVYSAERFLIATGERPRYLGIPGDKEYCISSDDLFSLPYCPGKTLVVGASYVALECAGFLAGIGLDVTVMVRSILLRGFDQDMANKIGEHMEEHGIKFIRQFVPTKIEQIEAGTPGRLKVTAKSTNSEETIEDEFNTVLLAVGRDSCTRTIGLETVGVKINEKTGKIPVTDEEQTNVPYIYAIGDILEGKLELTPVAIQAGRLLAQRLYGGSTVKCDYDNVPTTVFTPLEYGCCGLSEEKAVEKFGEENIEVYHSFFWPLEWTVPSRDNNKCYAKVICNLKDNERVVGFHVLGPNAGEVTQGFAAALKCGLTKQQLDSTIGIHPVCAEIFTTLSVTKRSGGDILQSGCUG.

FAD is bound by residues 18 to 23 (IGGGSG), 42 to 43 (DF), 58 to 59 (TC), and 63 to 67 (GCIPK). Cysteines 59 and 64 form a disulfide. Lysine 68 carries the N6-succinyllysine modification. A Phosphotyrosine modification is found at tyrosine 131. Residues 131–132 (YG) and threonine 161 each bind FAD. NADP(+) is bound by residues arginine 166, 198-204 (ASYVALE), 221-222 (RS), arginine 226, 226-228 (RGF), 291-293 (VGR), and lysine 315. Tyrosine 200 is an FAD binding site. FAD-binding positions include aspartate 334, 341–343 (ELT), and histidine 472. Glutamate 341 contributes to the NADP(+) binding site. The Proton acceptor role is filled by histidine 472. A cross-link (cysteinyl-selenocysteine (Cys-Sec)) is located at residues 497-498 (CU). Residue selenocysteine 498 is a non-standard amino acid, selenocysteine.

The protein belongs to the class-I pyridine nucleotide-disulfide oxidoreductase family. Homodimer. Requires FAD as cofactor. Post-translationally, ISGylated.

It localises to the cytoplasm. The enzyme catalyses [thioredoxin]-dithiol + NADP(+) = [thioredoxin]-disulfide + NADPH + H(+). It carries out the reaction H2O2 + NADPH + H(+) = NADP(+) + 2 H2O. Reduces disulfideprotein thioredoxin (Trx) to its dithiol-containing form. Homodimeric flavoprotein involved in the regulation of cellular redox reactions, growth and differentiation. Contains a selenocysteine residue at the C-terminal active site that is essential for catalysis. Also has reductase activity on hydrogen peroxide (H2O2). This chain is Thioredoxin reductase 1, cytoplasmic, found in Rattus norvegicus (Rat).